A 427-amino-acid chain; its full sequence is Isocitrate lyase (427 aa).

89–91 (SGW) contributes to the substrate binding site. D150 is a Mg(2+) binding site. Residue C188 is the Proton acceptor of the active site. Residues 189-190 (GH), R225, 310-314 (NCSPS), and T344 contribute to the substrate site.

It belongs to the isocitrate lyase/PEP mutase superfamily. Isocitrate lyase family. Homotetramer. Mg(2+) is required as a cofactor.

It catalyses the reaction D-threo-isocitrate = glyoxylate + succinate. It functions in the pathway carbohydrate metabolism; glyoxylate cycle; (S)-malate from isocitrate: step 1/2. Involved in the metabolic adaptation in response to environmental changes. Catalyzes the reversible formation of succinate and glyoxylate from isocitrate, a key step of the glyoxylate cycle, which operates as an anaplerotic route for replenishing the tricarboxylic acid cycle during growth on fatty acid substrates. In Halalkalibacterium halodurans (strain ATCC BAA-125 / DSM 18197 / FERM 7344 / JCM 9153 / C-125) (Bacillus halodurans), this protein is Isocitrate lyase (aceA).